We begin with the raw amino-acid sequence, 213 residues long: Probable thiopurine S-methyltransferase (213 aa).

W10, L45, E66, and R125 together coordinate S-adenosyl-L-methionine.

It belongs to the class I-like SAM-binding methyltransferase superfamily. TPMT family.

The protein localises to the cytoplasm. It carries out the reaction S-adenosyl-L-methionine + a thiopurine = S-adenosyl-L-homocysteine + a thiopurine S-methylether.. This is Probable thiopurine S-methyltransferase from Yarrowia lipolytica (strain CLIB 122 / E 150) (Yeast).